Reading from the N-terminus, the 503-residue chain is MELLPPRGRAPPDSSLDSASLTSLDSSVFCSEGEGEPLALGDSFTVNVGGSRFVLSQQALSCFPHTRLGKLAVVVASCRRRGALAAVPSPLELCDDANPVDNEYFFDRSSQAFRYVLHYYRTGRLHVMEQLCALSFLQEIQYWGIDELSIDSCCRDRYFRRKELSETLDFKKDTEDQESQHESEQDFSQGRCPTIRQKLWNILEKPGSCTAARIFGVISIIFVAVSIVNMALMSAELSWLDPQLLEILEYVCISWFTGEFVLRFLCVRDRCRFLRKVPNIIDLLAILPFYITLLVESLSGSQTTQELENVGRIVQVLRLLRALRMLKLGRHSTGLRSLGMTITQCYEEVGLLLLFLSVGISIFSTVEYFAEQSIPDTTFTSVPCAWWWATTSMTTVGYGDIRPDTTTGKIVAFMCILSGILVLALPIAIINDRFSACYFTLKLKEAAVRQREALKKLTKNIATDSYISVNLRDVYARSIMEMLRLKGRERASTRSSGGDDFWF.

The Cytoplasmic segment spans residues 1-213; the sequence is MELLPPRGRA…EKPGSCTAAR (213 aa). Residues 214–234 form a helical membrane-spanning segment; that stretch reads IFGVISIIFVAVSIVNMALMS. The Extracellular portion of the chain corresponds to 235–246; the sequence is AELSWLDPQLLE. A helical membrane pass occupies residues 247–267; it reads ILEYVCISWFTGEFVLRFLCV. The Cytoplasmic portion of the chain corresponds to 268-279; that stretch reads RDRCRFLRKVPN. Residues 280-300 traverse the membrane as a helical segment; sequence IIDLLAILPFYITLLVESLSG. Residues 301–312 are Extracellular-facing; that stretch reads SQTTQELENVGR. A helical; Voltage-sensor membrane pass occupies residues 313-334; it reads IVQVLRLLRALRMLKLGRHSTG. Residues 335 to 348 are Cytoplasmic-facing; sequence LRSLGMTITQCYEE. A helical transmembrane segment spans residues 349-369; it reads VGLLLLFLSVGISIFSTVEYF. Residues 395-400 carry the Selectivity filter motif; sequence TVGYGD. A helical membrane pass occupies residues 410–430; that stretch reads IVAFMCILSGILVLALPIAII. The Cytoplasmic segment spans residues 431–503; it reads NDRFSACYFT…RSSGGDDFWF (73 aa).

Belongs to the potassium channel family. V (TC 1.A.1.2) subfamily. Kv8.1/KCNV1 sub-subfamily. In terms of assembly, heteromultimer with KCNB1 and KCNB2. Interacts with KCNC4 and KCND1.

The protein resides in the cell membrane. Potassium channel subunit that does not form functional channels by itself. Modulates KCNB1 and KCNB2 channel activity by shifting the threshold for inactivation to more negative values and by slowing the rate of inactivation. Can down-regulate the channel activity of KCNB1, KCNB2, KCNC4 and KCND1, possibly by trapping them in intracellular membranes. The sequence is that of Potassium voltage-gated channel subfamily V member 1 (KCNV1) from Bos taurus (Bovine).